We begin with the raw amino-acid sequence, 119 residues long: Ribonuclease P protein component (119 aa).

Belongs to the RnpA family. As to quaternary structure, consists of a catalytic RNA component (M1 or rnpB) and a protein subunit.

The enzyme catalyses Endonucleolytic cleavage of RNA, removing 5'-extranucleotides from tRNA precursor.. Its function is as follows. RNaseP catalyzes the removal of the 5'-leader sequence from pre-tRNA to produce the mature 5'-terminus. It can also cleave other RNA substrates such as 4.5S RNA. The protein component plays an auxiliary but essential role in vivo by binding to the 5'-leader sequence and broadening the substrate specificity of the ribozyme. In Streptococcus equi subsp. equi (strain 4047), this protein is Ribonuclease P protein component.